The sequence spans 130 residues: Small ribosomal subunit protein uS9 (130 aa).

Belongs to the universal ribosomal protein uS9 family.

This chain is Small ribosomal subunit protein uS9, found in Histophilus somni (strain 129Pt) (Haemophilus somnus).